Reading from the N-terminus, the 794-residue chain is Potassium transporter 2 (794 aa).

The Cytoplasmic segment spans residues 1-21 (MDLNLGKCCGSRSSKKESWRS). Residues 22–42 (VLLLAYQSLGVVYGDLSISPL) form a helical membrane-spanning segment. Over 43-64 (YVFKSTFAEDIQHSETNEEIYG) the chain is Extracellular. Residues 65–85 (VMSFVFWTLTLVPLLKYVFIV) form a helical membrane-spanning segment. The Cytoplasmic segment spans residues 86-153 (LRADDNGEGG…EKHKWLHTAL (68 aa)). Residues 154–174 (LLLVLLGTCMVIGDGLLTPAI) traverse the membrane as a helical segment. Residues 175–193 (SVFSAVSGLELNMSKEHHQ) are Extracellular-facing. The chain crosses the membrane as a helical span at residues 194 to 214 (YAVIPITCFILVCLFSLQHFG). The Cytoplasmic segment spans residues 215–217 (THR). Residues 218 to 238 (VGFVFAPIVLTWLLCISGIGL) traverse the membrane as a helical segment. Residues 239-265 (YNIIQWNPHIYKALSPTYMFMFLRKTR) lie on the Extracellular side of the membrane. The helical transmembrane segment at 266–286 (VSGWMSLGGILLCITGAEAMF) threads the bilayer. Topologically, residues 287–294 (ADLGHFNY) are cytoplasmic. A helical membrane pass occupies residues 295–315 (AAIQIAFTFLVYPALILAYMG). The Extracellular segment spans residues 316–339 (QAAYLSRHHHSAHAIGFYVSVPKC). A helical transmembrane segment spans residues 340–360 (LHWPVLAVAILASVVGSQAII). Over 361–391 (SGTFSIINQSQSLGCFPRVKVIHTSDKMHGQ) the chain is Cytoplasmic. The chain crosses the membrane as a helical span at residues 392–412 (IYIPEINWMLMILCIAVTIGF). Over 413-417 (RDVKH) the chain is Extracellular. Helical transmembrane passes span 418-438 (LGNA…CLTS) and 439-459 (LVIV…LLFF). At 460–476 (GSIELLYFSASLTKFRE) the chain is on the extracellular side. The chain crosses the membrane as a helical span at residues 477–497 (GAWLPILLSLIFMIIMFVWHY). Topologically, residues 498 to 794 (TTIKKYEFDL…LLEVGMVYVV (297 aa)) are cytoplasmic.

Belongs to the HAK/KUP transporter (TC 2.A.72.3) family. As to expression, slightly detected in roots, stems, leaves and flowers of mature plants and in potassium-starved plants.

The protein localises to the cell membrane. Its function is as follows. Low-affinity potassium transporter. Could mediate the potassium-dependent cell expansion in growing tissues. The chain is Potassium transporter 2 (POT2) from Arabidopsis thaliana (Mouse-ear cress).